We begin with the raw amino-acid sequence, 212 residues long: MADNDIEEAVARALEDAPQRNFRETVDLAVNLRDLDLNDPSQRVDEGVVLPSGTGQETQIVVFADGETAVRADDVADDVLDEDDLSDLADDTDAAKDLADETDFFVAEAPMMQDIAGALGQVLGPRGKMPTPLQPDDDVVDTVNRMKNTVQIRSRDRRTFHTRVGAEDMSAEDIASNIDVIMRRLHANLEKGPLNVDSVYVKTTMGPAVEVA.

This sequence belongs to the universal ribosomal protein uL1 family. As to quaternary structure, part of the 50S ribosomal subunit.

Functionally, binds directly to 23S rRNA. Probably involved in E site tRNA release. Its function is as follows. Protein L1 is also a translational repressor protein, it controls the translation of its operon by binding to its mRNA. The polypeptide is Large ribosomal subunit protein uL1 (Halobacterium salinarum (strain ATCC 29341 / DSM 671 / R1)).